The primary structure comprises 492 residues: Glutamyl-tRNA(Gln) amidotransferase subunit A (492 aa).

Active-site charge relay system residues include K81 and S156. S180 functions as the Acyl-ester intermediate in the catalytic mechanism.

Belongs to the amidase family. GatA subfamily. Heterotrimer of A, B and C subunits.

It catalyses the reaction L-glutamyl-tRNA(Gln) + L-glutamine + ATP + H2O = L-glutaminyl-tRNA(Gln) + L-glutamate + ADP + phosphate + H(+). Its function is as follows. Allows the formation of correctly charged Gln-tRNA(Gln) through the transamidation of misacylated Glu-tRNA(Gln) in organisms which lack glutaminyl-tRNA synthetase. The reaction takes place in the presence of glutamine and ATP through an activated gamma-phospho-Glu-tRNA(Gln). The polypeptide is Glutamyl-tRNA(Gln) amidotransferase subunit A (Rhodococcus erythropolis (strain PR4 / NBRC 100887)).